Consider the following 312-residue polypeptide: Ribonuclease Z (312 aa).

Residues His62, His64, Asp66, His67, His144, Asp215, and His273 each contribute to the Zn(2+) site. Residue Asp66 is the Proton acceptor of the active site.

It belongs to the RNase Z family. Homodimer. Requires Zn(2+) as cofactor.

The catalysed reaction is Endonucleolytic cleavage of RNA, removing extra 3' nucleotides from tRNA precursor, generating 3' termini of tRNAs. A 3'-hydroxy group is left at the tRNA terminus and a 5'-phosphoryl group is left at the trailer molecule.. Its function is as follows. Zinc phosphodiesterase, which displays some tRNA 3'-processing endonuclease activity. Probably involved in tRNA maturation, by removing a 3'-trailer from precursor tRNA. The chain is Ribonuclease Z from Prochlorococcus marinus (strain MIT 9301).